The following is a 79-amino-acid chain: MAERSQHLQDVFLNTVRKQKISLTIFLVNGVKLTGIVTSFDSFCVLLRRDGHAQLVYKHAISTIMPGQPVQMFEGESPE.

Residues Asp10–Val70 form the Sm domain.

Belongs to the Hfq family. As to quaternary structure, homohexamer.

In terms of biological role, RNA chaperone that binds small regulatory RNA (sRNAs) and mRNAs to facilitate mRNA translational regulation in response to envelope stress, environmental stress and changes in metabolite concentrations. Also binds with high specificity to tRNAs. The polypeptide is RNA-binding protein Hfq (Bartonella tribocorum (strain CIP 105476 / IBS 506)).